A 603-amino-acid chain; its full sequence is Glutathione-regulated potassium-efflux system protein KefB (603 aa).

Transmembrane regions (helical) follow at residues 5–25, 29–49, 53–73, 87–107, 115–135, 152–172, 180–202, 207–227, 230–250, 268–288, 291–311, 326–346, and 356–376; these read ALLT…PIAA, IGAV…GLGF, VEAI…IIGL, IFGV…GALY, SALI…LQLM, VLLF…ILAG, WERI…YLVR, FIAA…LVLG, LFME…GILL, GLLL…GILY, IVKI…VLYF, FAGV…AAAS, and PLLL…MQVI. Residues 400-521 enclose the RCK N-terminal domain; sequence EPQVIVVGFG…VRHFSRETFS (122 aa).

Belongs to the monovalent cation:proton antiporter 2 (CPA2) transporter (TC 2.A.37) family. KefB subfamily. Interacts with the regulatory subunit KefG.

It is found in the cell inner membrane. Pore-forming subunit of a potassium efflux system that confers protection against electrophiles. Catalyzes K(+)/H(+) antiport. The sequence is that of Glutathione-regulated potassium-efflux system protein KefB from Pectobacterium atrosepticum (strain SCRI 1043 / ATCC BAA-672) (Erwinia carotovora subsp. atroseptica).